Consider the following 292-residue polypeptide: 4-hydroxy-tetrahydrodipicolinate synthase (292 aa).

Thr-45 lines the pyruvate pocket. The active-site Proton donor/acceptor is the Tyr-134. The Schiff-base intermediate with substrate role is filled by Lys-162. Val-204 is a pyruvate binding site.

Belongs to the DapA family. Homotetramer; dimer of dimers.

The protein localises to the cytoplasm. The catalysed reaction is L-aspartate 4-semialdehyde + pyruvate = (2S,4S)-4-hydroxy-2,3,4,5-tetrahydrodipicolinate + H2O + H(+). The protein operates within amino-acid biosynthesis; L-lysine biosynthesis via DAP pathway; (S)-tetrahydrodipicolinate from L-aspartate: step 3/4. In terms of biological role, catalyzes the condensation of (S)-aspartate-beta-semialdehyde [(S)-ASA] and pyruvate to 4-hydroxy-tetrahydrodipicolinate (HTPA). The polypeptide is 4-hydroxy-tetrahydrodipicolinate synthase (Marinobacter nauticus (strain ATCC 700491 / DSM 11845 / VT8) (Marinobacter aquaeolei)).